Here is a 310-residue protein sequence, read N- to C-terminus: ADP-L-glycero-D-manno-heptose-6-epimerase (310 aa).

Residues 10 to 11, 31 to 32, Lys38, Lys53, 75 to 79, and Asn92 each bind NADP(+); these read FI, DN, and EGACS. The Proton acceptor role is filled by Tyr140. Position 144 (Lys144) interacts with NADP(+). Asn169 is a binding site for substrate. Val170 and Lys178 together coordinate NADP(+). The Proton acceptor role is filled by Lys178. Residues Gly180, His187, 201-204, Arg209, and Tyr272 contribute to the substrate site; that span reads FAGS.

Belongs to the NAD(P)-dependent epimerase/dehydratase family. HldD subfamily. Homopentamer. It depends on NADP(+) as a cofactor.

It carries out the reaction ADP-D-glycero-beta-D-manno-heptose = ADP-L-glycero-beta-D-manno-heptose. The protein operates within nucleotide-sugar biosynthesis; ADP-L-glycero-beta-D-manno-heptose biosynthesis; ADP-L-glycero-beta-D-manno-heptose from D-glycero-beta-D-manno-heptose 7-phosphate: step 4/4. Its function is as follows. Catalyzes the interconversion between ADP-D-glycero-beta-D-manno-heptose and ADP-L-glycero-beta-D-manno-heptose via an epimerization at carbon 6 of the heptose. In Sodalis glossinidius (strain morsitans), this protein is ADP-L-glycero-D-manno-heptose-6-epimerase.